We begin with the raw amino-acid sequence, 270 residues long: Phosphatidylinositol transfer protein alpha isoform (270 aa).

6 residues coordinate a 1,2-diacyl-sn-glycero-3-phospho-(1D-myo-inositol): threonine 58, lysine 60, glutamate 85, asparagine 89, threonine 96, and lysine 194. Lysine 215 bears the N6-acetyllysine mark. The span at 250-263 (TKRQLDEMRQKDPV) shows a compositional bias: basic and acidic residues. The segment at 250–270 (TKRQLDEMRQKDPVKGMTADD) is disordered.

The protein belongs to the PtdIns transfer protein family. PI transfer class I subfamily. Phosphorylated by PKC in a calcium and phosphatidylserine-dependent manner.

The protein resides in the cytoplasm. It is found in the nucleus. It catalyses the reaction a 1,2-diacyl-sn-glycero-3-phosphocholine(in) = a 1,2-diacyl-sn-glycero-3-phosphocholine(out). The enzyme catalyses a 1,2-diacyl-sn-glycero-3-phospho-(1D-myo-inositol)(in) = a 1,2-diacyl-sn-glycero-3-phospho-(1D-myo-inositol)(out). Catalyzes the transfer of phosphatidylinositol (PI) and phosphatidylcholine (PC) between membranes. Shows a preference for PI and PC containing shorter saturated or monosaturated acyl chains at the sn-1 and sn-2 positions. Preference order for PC is C16:1 &gt; C16:0 &gt; C18:1 &gt; C18:0 &gt; C20:4 and for PI is C16:1 &gt; C16:0 &gt; C18:1 &gt; C18:0 &gt; C20:4 &gt; C20:3. This is Phosphatidylinositol transfer protein alpha isoform (PITPNA) from Oryctolagus cuniculus (Rabbit).